A 208-amino-acid polypeptide reads, in one-letter code: Photosystem I reaction center subunit II-1, chloroplastic (208 aa).

The transit peptide at 1–45 directs the protein to the chloroplast; it reads MATQAAGIFNSAITTAATSGVKKLHFFSTTHRPKSLSFTKTAIRA. Position 48 is a phosphothreonine (T48). Residues 49 to 72 are disordered; sequence DSSAAAAAAPATKEAPVGFTPPQL. Residues 50–64 show a composition bias toward low complexity; it reads SSAAAAAAPATKEAP. The ferredoxin and ferredoxin-oxidoreductase binding stretch occupies residues 141–149; the sequence is RLRSKYKIT.

The protein belongs to the PsaD family. As to quaternary structure, interacts with PGRL1A and PGRL1B. Post-translationally, phosphorylated by a threonine specific thylakoid kinase in a light activated and redox-dependent manner.

The protein resides in the plastid. Its subcellular location is the chloroplast thylakoid membrane. PsaD can form complexes with ferredoxin and ferredoxin-oxidoreductase in photosystem I (PS I) reaction center. PSAD may encode the ferredoxin-docking protein. This is Photosystem I reaction center subunit II-1, chloroplastic (psaD1) from Arabidopsis thaliana (Mouse-ear cress).